The following is a 183-amino-acid chain: 2-C-methyl-D-erythritol 2,4-cyclodiphosphate synthase (183 aa).

A divalent metal cation-binding residues include Asp8 and His10. Residues 8 to 10 and 34 to 35 each bind 4-CDP-2-C-methyl-D-erythritol 2-phosphate; these read DVH and HS. Residue His42 participates in a divalent metal cation binding. 4-CDP-2-C-methyl-D-erythritol 2-phosphate-binding positions include 56 to 58, 61 to 65, 132 to 135, and Phe139; these read DIG, FPDTD, and TTEE.

This sequence belongs to the IspF family. In terms of assembly, homotrimer. A divalent metal cation serves as cofactor.

It catalyses the reaction 4-CDP-2-C-methyl-D-erythritol 2-phosphate = 2-C-methyl-D-erythritol 2,4-cyclic diphosphate + CMP. It functions in the pathway isoprenoid biosynthesis; isopentenyl diphosphate biosynthesis via DXP pathway; isopentenyl diphosphate from 1-deoxy-D-xylulose 5-phosphate: step 4/6. Functionally, involved in the biosynthesis of isopentenyl diphosphate (IPP) and dimethylallyl diphosphate (DMAPP), two major building blocks of isoprenoid compounds. Catalyzes the conversion of 4-diphosphocytidyl-2-C-methyl-D-erythritol 2-phosphate (CDP-ME2P) to 2-C-methyl-D-erythritol 2,4-cyclodiphosphate (ME-CPP) with a corresponding release of cytidine 5-monophosphate (CMP). The protein is 2-C-methyl-D-erythritol 2,4-cyclodiphosphate synthase of Lachnospira eligens (strain ATCC 27750 / DSM 3376 / VPI C15-48 / C15-B4) (Eubacterium eligens).